The chain runs to 316 residues: uncharacterized protein (316 aa).

Residues 12–34 (RWVCLTSVILFCFCIAVMRYGGV) traverse the membrane as a helical segment.

The protein localises to the membrane. This is an uncharacterized protein from Treponema pallidum (strain Nichols).